Reading from the N-terminus, the 331-residue chain is 6-phosphogluconolactonase (331 aa).

An N6-acetyllysine modification is found at K287.

Belongs to the cycloisomerase 2 family.

It carries out the reaction 6-phospho-D-glucono-1,5-lactone + H2O = 6-phospho-D-gluconate + H(+). The protein operates within carbohydrate degradation; pentose phosphate pathway; D-ribulose 5-phosphate from D-glucose 6-phosphate (oxidative stage): step 2/3. Functionally, catalyzes the hydrolysis of 6-phosphogluconolactone to 6-phosphogluconate. The sequence is that of 6-phosphogluconolactonase from Escherichia coli O8 (strain IAI1).